Reading from the N-terminus, the 111-residue chain is MNKCNLLVQILQCKSVKTTSNENQIIKLKARFKKRNKVVAIDLLIWNRQSLEIFKLLKKFDYIIIEGKLHRSETTDIKLMLNQQKDLVFSTSRIFKYKSLLKNKDIDLFIK.

Positions 1–98 constitute an SSB domain; that stretch reads MNKCNLLVQI…FSTSRIFKYK (98 aa).

It localises to the plastid. Its subcellular location is the chloroplast. In Porphyra purpurea (Red seaweed), this protein is Putative single-stranded DNA-binding protein ycf41 (ycf41).